The sequence spans 501 residues: Zinc-binding lipoprotein AdcA (501 aa).

Residues 1-18 form the signal peptide; the sequence is MKKISLLLASLCALFLVA. A lipid anchor (N-palmitoyl cysteine) is attached at C19. Residue C19 is the site of S-diacylglycerol cysteine attachment. A Zn(2+)-binding site is contributed by H63. The interval 116 to 136 is disordered; sequence LPGGEEEEGDHDHGEEGHHHE. Residues 120-136 are his-rich loop; it reads EEEEGDHDHGEEGHHHE. Residues 125 to 136 are compositionally biased toward basic and acidic residues; it reads DHDHGEEGHHHE. Zn(2+) is bound by residues H140, H204, and E279.

The protein belongs to the bacterial solute-binding protein 9 family.

The protein localises to the cell membrane. Its function is as follows. Part of the ATP-binding cassette (ABC) transport system AdcABC involved in zinc import. Binds zinc with high affinity and specificity and delivers it to the membrane permease for translocation into the cytoplasm. Required for transformability. This chain is Zinc-binding lipoprotein AdcA (adcA), found in Streptococcus pneumoniae (strain ATCC BAA-255 / R6).